The sequence spans 446 residues: Homocitrate synthase, mitochondrial (446 aa).

A compositionally biased stretch (low complexity) spans 1-14; sequence MCATDNAPAANAAP. A disordered region spans residues 1–36; that stretch reads MCATDNAPAANAAPEKPSNVGVEVGHTGEQTNPYGA. The 260-residue stretch at 48–307 folds into the Pyruvate carboxyltransferase domain; the sequence is FQLIESTLRE…HKLRDLENLV (260 aa). R56 contacts 2-oxoglutarate. E57 contributes to the Mg(2+) binding site. 2-oxoglutarate is bound by residues H116, R176, and T210. Positions 237 and 239 each coordinate Mg(2+). H334 serves as the catalytic Proton acceptor. A disordered region spans residues 422–446; the sequence is TPTVAATEGPAVEDEPAAKKAKTEE. Basic and acidic residues predominate over residues 437–446; sequence PAAKKAKTEE.

This sequence belongs to the alpha-IPM synthase/homocitrate synthase family. Homocitrate synthase LYS20/LYS21 subfamily. Mg(2+) is required as a cofactor. The cofactor is Mn(2+).

It localises to the mitochondrion. It carries out the reaction acetyl-CoA + 2-oxoglutarate + H2O = (2R)-homocitrate + CoA + H(+). The protein operates within amino-acid biosynthesis; L-lysine biosynthesis via AAA pathway; L-alpha-aminoadipate from 2-oxoglutarate: step 1/5. Its function is as follows. Catalyzes the aldol-type condensation of 2-oxoglutarate with acetyl-CoA to yield homocitrate. Carries out the first step of the alpha-aminoadipate (AAA) lysine biosynthesis pathway. The chain is Homocitrate synthase, mitochondrial (LYS1) from Yarrowia lipolytica (strain CLIB 122 / E 150) (Yeast).